The sequence spans 176 residues: Peptide methionine sulfoxide reductase B3 (176 aa).

The signal sequence occupies residues 1–26 (MNIVNSKILFLSFTLLLLLQSSIVES). Positions 51–172 (DEEWRAILSP…NSVSLKFTPA (122 aa)) constitute a MsrB domain. Residues Cys-90, Cys-93, Cys-136, and Cys-139 each coordinate Zn(2+). Cys-108 and Cys-161 are joined by a disulfide. Cys-161 acts as the Nucleophile in catalysis.

It belongs to the MsrB Met sulfoxide reductase family. The cofactor is Zn(2+).

It is found in the endoplasmic reticulum. The enzyme catalyses L-methionyl-[protein] + [thioredoxin]-disulfide + H2O = L-methionyl-(R)-S-oxide-[protein] + [thioredoxin]-dithiol. Its function is as follows. Catalyzes the reduction of methionine sulfoxide (MetSO) to methionine in proteins. Plays a protective role against oxidative stress by restoring activity to proteins that have been inactivated by methionine oxidation. Involved in cold tolerance. Eliminates MetSO and reactive oxygen species that accumulate at the ER during cold acclimation. MSRB family specifically reduces the MetSO R-enantiomer. In Arabidopsis thaliana (Mouse-ear cress), this protein is Peptide methionine sulfoxide reductase B3 (MSRB3).